Reading from the N-terminus, the 122-residue chain is Large ribosomal subunit protein bL12 (122 aa).

It belongs to the bacterial ribosomal protein bL12 family. Homodimer. Part of the ribosomal stalk of the 50S ribosomal subunit. Forms a multimeric L10(L12)X complex, where L10 forms an elongated spine to which 2 to 4 L12 dimers bind in a sequential fashion. Binds GTP-bound translation factors.

Functionally, forms part of the ribosomal stalk which helps the ribosome interact with GTP-bound translation factors. Is thus essential for accurate translation. The chain is Large ribosomal subunit protein bL12 from Aliivibrio fischeri (strain ATCC 700601 / ES114) (Vibrio fischeri).